A 346-amino-acid polypeptide reads, in one-letter code: N-acetyl-gamma-glutamyl-phosphate reductase (346 aa).

Residue Cys149 is part of the active site.

The protein belongs to the NAGSA dehydrogenase family. Type 1 subfamily.

The protein localises to the cytoplasm. The enzyme catalyses N-acetyl-L-glutamate 5-semialdehyde + phosphate + NADP(+) = N-acetyl-L-glutamyl 5-phosphate + NADPH + H(+). The protein operates within amino-acid biosynthesis; L-arginine biosynthesis; N(2)-acetyl-L-ornithine from L-glutamate: step 3/4. Catalyzes the NADPH-dependent reduction of N-acetyl-5-glutamyl phosphate to yield N-acetyl-L-glutamate 5-semialdehyde. The sequence is that of N-acetyl-gamma-glutamyl-phosphate reductase from Desulfotalea psychrophila (strain LSv54 / DSM 12343).